We begin with the raw amino-acid sequence, 333 residues long: Putative F-box protein At4g11580 (333 aa).

Positions 11-58 (VSEWADLNKDILELIFNKLDVMDITMGASRVCISWFLASHNKTLWNTV) constitute an F-box domain.

This Arabidopsis thaliana (Mouse-ear cress) protein is Putative F-box protein At4g11580.